We begin with the raw amino-acid sequence, 1909 residues long: Plexin-B3 (1909 aa).

The first 44 residues, 1–44, serve as a signal peptide directing secretion; that stretch reads MCHAAQETPLLHHFMAPVMARWPPFGLCLLLLLLSPPPLPLTGA. In terms of domain architecture, Sema spans 45 to 471; the sequence is HRFSAPNTTL…TAHQVDRIPV (427 aa). The Extracellular portion of the chain corresponds to 45-1255; sequence HRFSAPNTTL…PLSAFPVEAQ (1211 aa). Asn51 carries an N-linked (GlcNAc...) asparagine glycan. 2 cysteine pairs are disulfide-bonded: Cys98-Cys107 and Cys132-Cys140. A glycan (N-linked (GlcNAc...) asparagine) is linked at Asn231. Disulfide bonds link Cys267–Cys370, Cys283–Cys315, Cys333–Cys357, Cys474–Cys491, Cys480–Cys525, Cys483–Cys500, Cys494–Cys506, and Cys562–Cys580. The PSI 1 domain maps to 473 to 526; that stretch reads ACPQFPDCASCLQAQDPLCGWCVLQGRCTRKGQCGRAGQLNQWLWSYEEDSHCL. An N-linked (GlcNAc...) asparagine glycan is attached at Asn615. PSI domains are found at residues 620 to 682 and 787 to 833; these read DCSA…GACP and DCAM…LLCP. N-linked (GlcNAc...) asparagine glycosylation is found at Asn802, Asn900, Asn957, Asn1101, and Asn1218. IPT/TIG domains are found at residues 835–925, 927–1012, 1015–1145, and 1159–1244; these read PSID…FTYQ, PVLL…FRYT, PQLV…FLYQ, and ARPY…YEAE. The helical transmembrane segment at 1256-1276 threads the bilayer; that stretch reads AGVGMGAAVLIAAVLLLTLMY. The Cytoplasmic segment spans residues 1277–1909; that stretch reads RHKSKQALRD…ALVENKVTDL (633 aa).

Belongs to the plexin family. Interacts (via cytoplasmic domain) with RAC1 and ARHGDIA. Binds MET and MST1R. Interacts (via cytoplasmic domain) with FSCN1. Interacts with RIT2/RIN. May form homodimers (via Sema domain). In terms of tissue distribution, expression detected in Purkinje and granular cells in cerebellum, and in brain neocortex but not in corpus callosum. Expressed in glioma cells and embryonic kidney cells (at protein level). Expressed in brain, liver, pancreas and placenta, with weak expression detected also in lung and kidney. Expressed in several glioma cell lines.

The protein localises to the cell membrane. Receptor for SEMA5A that plays a role in axon guidance, invasive growth and cell migration. Stimulates neurite outgrowth and mediates Ca(2+)/Mg(2+)-dependent cell aggregation. In glioma cells, SEMA5A stimulation of PLXNB3 results in the disassembly of F-actin stress fibers, disruption of focal adhesions and cellular collapse as well as inhibition of cell migration and invasion through ARHGDIA-mediated inactivation of RAC1. This is Plexin-B3 (PLXNB3) from Homo sapiens (Human).